A 286-amino-acid chain; its full sequence is UDP-3-O-acyl-N-acetylglucosamine deacetylase (286 aa).

Positions 79, 237, and 241 each coordinate Zn(2+). The active-site Proton donor is the histidine 264.

This sequence belongs to the LpxC family. Zn(2+) is required as a cofactor.

It catalyses the reaction a UDP-3-O-[(3R)-3-hydroxyacyl]-N-acetyl-alpha-D-glucosamine + H2O = a UDP-3-O-[(3R)-3-hydroxyacyl]-alpha-D-glucosamine + acetate. The protein operates within glycolipid biosynthesis; lipid IV(A) biosynthesis; lipid IV(A) from (3R)-3-hydroxytetradecanoyl-[acyl-carrier-protein] and UDP-N-acetyl-alpha-D-glucosamine: step 2/6. In terms of biological role, catalyzes the hydrolysis of UDP-3-O-myristoyl-N-acetylglucosamine to form UDP-3-O-myristoylglucosamine and acetate, the committed step in lipid A biosynthesis. This chain is UDP-3-O-acyl-N-acetylglucosamine deacetylase, found in Chlamydia trachomatis serovar A (strain ATCC VR-571B / DSM 19440 / HAR-13).